The primary structure comprises 395 residues: S-adenosylmethionine synthase (395 aa).

Histidine 19 is a binding site for ATP. Aspartate 21 provides a ligand contact to Mg(2+). Glutamate 47 is a binding site for K(+). 2 residues coordinate L-methionine: glutamate 60 and glutamine 103. Positions 103 to 113 are flexible loop; that stretch reads QSPDIAQGVNS. ATP contacts are provided by residues 170–172, 236–237, aspartate 245, 251–252, alanine 268, and lysine 272; these read DNK, KF, and RK. Aspartate 245 contributes to the L-methionine binding site. Lysine 276 lines the L-methionine pocket.

This sequence belongs to the AdoMet synthase family. Homotetramer; dimer of dimers. Requires Mg(2+) as cofactor. K(+) is required as a cofactor.

It is found in the cytoplasm. It carries out the reaction L-methionine + ATP + H2O = S-adenosyl-L-methionine + phosphate + diphosphate. Its pathway is amino-acid biosynthesis; S-adenosyl-L-methionine biosynthesis; S-adenosyl-L-methionine from L-methionine: step 1/1. Catalyzes the formation of S-adenosylmethionine (AdoMet) from methionine and ATP. The overall synthetic reaction is composed of two sequential steps, AdoMet formation and the subsequent tripolyphosphate hydrolysis which occurs prior to release of AdoMet from the enzyme. This Rhodopirellula baltica (strain DSM 10527 / NCIMB 13988 / SH1) protein is S-adenosylmethionine synthase.